We begin with the raw amino-acid sequence, 153 residues long: UPF0251 protein CT0950 (153 aa).

This sequence belongs to the UPF0251 family.

In Chlorobaculum tepidum (strain ATCC 49652 / DSM 12025 / NBRC 103806 / TLS) (Chlorobium tepidum), this protein is UPF0251 protein CT0950.